Consider the following 257-residue polypeptide: Cytochrome b561 domain-containing protein At2g30890 (257 aa).

An N-terminal signal peptide occupies residues Met1–Ser21. The region spanning Gln22–Gln219 is the Cytochrome b561 domain. 5 helical membrane-spanning segments follow: residues Val55–Ile75, Leu91–Val111, His125–Leu145, Trp157–Tyr177, and Ala191–Phe211. 4 residues coordinate heme b: His56, His95, His125, and His161. A disordered region spans residues Asn235–Cys257. The span at His243–Cys257 shows a compositional bias: basic and acidic residues.

It depends on heme b as a cofactor.

It is found in the membrane. This is Cytochrome b561 domain-containing protein At2g30890 from Arabidopsis thaliana (Mouse-ear cress).